The following is a 132-amino-acid chain: Large ribosomal subunit protein uL14 (132 aa).

The protein belongs to the universal ribosomal protein uL14 family. As to quaternary structure, part of the 50S ribosomal subunit. Forms a cluster with proteins L3 and L24e, part of which may contact the 16S rRNA in 2 intersubunit bridges.

Functionally, binds to 23S rRNA. Forms part of two intersubunit bridges in the 70S ribosome. This Methanococcus maripaludis (strain C7 / ATCC BAA-1331) protein is Large ribosomal subunit protein uL14.